The primary structure comprises 231 residues: Biosynthetic peptidoglycan transglycosylase (231 aa).

A helical transmembrane segment spans residues 7-27 (LLFWLIVVPVLLVLLLQLYFF).

Belongs to the glycosyltransferase 51 family.

It is found in the cell inner membrane. It catalyses the reaction [GlcNAc-(1-&gt;4)-Mur2Ac(oyl-L-Ala-gamma-D-Glu-L-Lys-D-Ala-D-Ala)](n)-di-trans,octa-cis-undecaprenyl diphosphate + beta-D-GlcNAc-(1-&gt;4)-Mur2Ac(oyl-L-Ala-gamma-D-Glu-L-Lys-D-Ala-D-Ala)-di-trans,octa-cis-undecaprenyl diphosphate = [GlcNAc-(1-&gt;4)-Mur2Ac(oyl-L-Ala-gamma-D-Glu-L-Lys-D-Ala-D-Ala)](n+1)-di-trans,octa-cis-undecaprenyl diphosphate + di-trans,octa-cis-undecaprenyl diphosphate + H(+). It participates in cell wall biogenesis; peptidoglycan biosynthesis. Functionally, peptidoglycan polymerase that catalyzes glycan chain elongation from lipid-linked precursors. In Janthinobacterium sp. (strain Marseille) (Minibacterium massiliensis), this protein is Biosynthetic peptidoglycan transglycosylase.